The primary structure comprises 241 residues: Uridylate kinase (241 aa).

15–18 (KLSG) serves as a coordination point for ATP. Residues 23 to 28 (GTEGFG) are involved in allosteric activation by GTP. Residue G57 participates in UMP binding. ATP-binding residues include G58 and R62. Residues D77 and 138–145 (TGNPFFTT) contribute to the UMP site. Residues T165, F171, and D174 each contribute to the ATP site.

The protein belongs to the UMP kinase family. As to quaternary structure, homohexamer.

The protein localises to the cytoplasm. It carries out the reaction UMP + ATP = UDP + ADP. It functions in the pathway pyrimidine metabolism; CTP biosynthesis via de novo pathway; UDP from UMP (UMPK route): step 1/1. Allosterically activated by GTP. Inhibited by UTP. Functionally, catalyzes the reversible phosphorylation of UMP to UDP. The polypeptide is Uridylate kinase (Escherichia coli O139:H28 (strain E24377A / ETEC)).